The primary structure comprises 98 residues: Hainantoxin-XVII.3 (98 aa).

A signal peptide spans 1–40; the sequence is MTTVGVSLFRRSPEKITMKIATFLGLSFLLIASYFLICEA. The propeptide occupies 41-64; it reads QHPGFQELLILEENMRDPENSKER. Cystine bridges form between Cys-66-Cys-81, Cys-73-Cys-85, and Cys-80-Cys-95.

This sequence belongs to the hainantoxin family. 17 subfamily. In terms of tissue distribution, expressed by the venom gland.

The protein resides in the secreted. Its function is as follows. Inhibits with low potency Kv1.2/KCNA2 and Kv1.3/KCNA3 voltage-gated potassium channels. This is Hainantoxin-XVII.3 from Cyriopagopus hainanus (Chinese bird spider).